A 1342-amino-acid chain; its full sequence is DNA-directed RNA polymerase subunit beta (1342 aa).

This sequence belongs to the RNA polymerase beta chain family. In terms of assembly, the RNAP catalytic core consists of 2 alpha, 1 beta, 1 beta' and 1 omega subunit. When a sigma factor is associated with the core the holoenzyme is formed, which can initiate transcription.

It catalyses the reaction RNA(n) + a ribonucleoside 5'-triphosphate = RNA(n+1) + diphosphate. Its function is as follows. DNA-dependent RNA polymerase catalyzes the transcription of DNA into RNA using the four ribonucleoside triphosphates as substrates. The polypeptide is DNA-directed RNA polymerase subunit beta (Aliivibrio fischeri (strain MJ11) (Vibrio fischeri)).